The chain runs to 336 residues: Ornithine carbamoyltransferase (336 aa).

Residues 56–59 (STRT), glutamine 83, arginine 107, and 134–137 (HPTQ) each bind carbamoyl phosphate. L-ornithine contacts are provided by residues asparagine 168, aspartate 232, and 236 to 237 (SM). Residues 274 to 275 (CL) and arginine 320 contribute to the carbamoyl phosphate site.

The protein belongs to the aspartate/ornithine carbamoyltransferase superfamily. OTCase family.

The protein localises to the cytoplasm. The enzyme catalyses carbamoyl phosphate + L-ornithine = L-citrulline + phosphate + H(+). Its pathway is amino-acid biosynthesis; L-arginine biosynthesis; L-arginine from L-ornithine and carbamoyl phosphate: step 1/3. Functionally, reversibly catalyzes the transfer of the carbamoyl group from carbamoyl phosphate (CP) to the N(epsilon) atom of ornithine (ORN) to produce L-citrulline. This chain is Ornithine carbamoyltransferase, found in Erwinia tasmaniensis (strain DSM 17950 / CFBP 7177 / CIP 109463 / NCPPB 4357 / Et1/99).